Here is a 95-residue protein sequence, read N- to C-terminus: uncharacterized protein (95 aa).

Positions 1–22 are cleaved as a signal peptide; the sequence is MLPGFTMIITSLLLTFFREVEH. Residues 23–52 are Extracellular-facing; sequence LLPECLTITNTPQRTLVLIQRFTLLQKVMT. A helical membrane pass occupies residues 53-69; the sequence is IHLLLSIGTLGSLFTLH. Topologically, residues 70–95 are cytoplasmic; the sequence is PQLLKTNLLQKLHKELNSNLDYLISC.

The protein localises to the host membrane. This is an uncharacterized protein from Acidianus bottle-shaped virus (isolate Italy/Pozzuoli) (ABV).